A 366-amino-acid chain; its full sequence is Putative agmatine deiminase (366 aa).

The active-site Amidino-cysteine intermediate is Cys-357.

Belongs to the agmatine deiminase family.

The enzyme catalyses agmatine + H2O = N-carbamoylputrescine + NH4(+). The sequence is that of Putative agmatine deiminase from Lactococcus lactis subsp. lactis (strain IL1403) (Streptococcus lactis).